The following is a 454-amino-acid chain: Keratin, type I cuticular Ha5 (454 aa).

Positions 1-97 are head; that stretch reads MASKCLKASF…FGEGILTGNE (97 aa). Residues 97 to 407 form the IF rod domain; sequence EKETMQFLND…GLLDSEDCKL (311 aa). Positions 98 to 125 are coil 1A; that stretch reads KETMQFLNDRLASYLEKCGSWSGRTRSW. A linker 1 region spans residues 134–142; sequence SNSALPVPD. Positions 143–243 are coil 1B; sequence YQSYFQTIEE…HEEEVNSLRC (101 aa). The interval 244–259 is linker 12; it reads QLGDRLNVEVDAAPPV. The interval 260–403 is coil 2; the sequence is DLNRVLNEMR…NTYRGLLDSE (144 aa). The segment at 404 to 454 is tail; the sequence is DCKLPCNPCAPDHSPSKSCLPCLPAASCGPGMARTTCSPRPICVPCPGSRF.

This sequence belongs to the intermediate filament family.

The sequence is that of Keratin, type I cuticular Ha5 from Bos taurus (Bovine).